The following is a 353-amino-acid chain: Phosphate acyltransferase (353 aa).

This sequence belongs to the PlsX family. Homodimer. Probably interacts with PlsY.

Its subcellular location is the cytoplasm. The catalysed reaction is a fatty acyl-[ACP] + phosphate = an acyl phosphate + holo-[ACP]. It participates in lipid metabolism; phospholipid metabolism. Its function is as follows. Catalyzes the reversible formation of acyl-phosphate (acyl-PO(4)) from acyl-[acyl-carrier-protein] (acyl-ACP). This enzyme utilizes acyl-ACP as fatty acyl donor, but not acyl-CoA. This chain is Phosphate acyltransferase, found in Rhodopseudomonas palustris (strain HaA2).